The chain runs to 287 residues: Phosphatidylserine decarboxylase proenzyme (287 aa).

Catalysis depends on charge relay system; for autoendoproteolytic cleavage activity residues D90, H147, and S252. Catalysis depends on S252, which acts as the Schiff-base intermediate with substrate; via pyruvic acid; for decarboxylase activity. The residue at position 252 (S252) is a Pyruvic acid (Ser); by autocatalysis.

This sequence belongs to the phosphatidylserine decarboxylase family. PSD-B subfamily. Prokaryotic type I sub-subfamily. Heterodimer of a large membrane-associated beta subunit and a small pyruvoyl-containing alpha subunit. The cofactor is pyruvate. Is synthesized initially as an inactive proenzyme. Formation of the active enzyme involves a self-maturation process in which the active site pyruvoyl group is generated from an internal serine residue via an autocatalytic post-translational modification. Two non-identical subunits are generated from the proenzyme in this reaction, and the pyruvate is formed at the N-terminus of the alpha chain, which is derived from the carboxyl end of the proenzyme. The autoendoproteolytic cleavage occurs by a canonical serine protease mechanism, in which the side chain hydroxyl group of the serine supplies its oxygen atom to form the C-terminus of the beta chain, while the remainder of the serine residue undergoes an oxidative deamination to produce ammonia and the pyruvoyl prosthetic group on the alpha chain. During this reaction, the Ser that is part of the protease active site of the proenzyme becomes the pyruvoyl prosthetic group, which constitutes an essential element of the active site of the mature decarboxylase.

Its subcellular location is the cell membrane. The enzyme catalyses a 1,2-diacyl-sn-glycero-3-phospho-L-serine + H(+) = a 1,2-diacyl-sn-glycero-3-phosphoethanolamine + CO2. The protein operates within phospholipid metabolism; phosphatidylethanolamine biosynthesis; phosphatidylethanolamine from CDP-diacylglycerol: step 2/2. Its function is as follows. Catalyzes the formation of phosphatidylethanolamine (PtdEtn) from phosphatidylserine (PtdSer). This Pseudomonas entomophila (strain L48) protein is Phosphatidylserine decarboxylase proenzyme.